The sequence spans 555 residues: Glutamine--tRNA ligase (555 aa).

The short motif at 34-44 (PEPNGYLHIGH) is the 'HIGH' region element. ATP is bound by residues 35–37 (EPN) and 41–47 (HIGHAKS). 2 residues coordinate L-glutamine: D67 and Y212. ATP is bound by residues T231, 261–262 (RL), and 269–271 (MSK). Residues 268–272 (IMSKR) carry the 'KMSKS' region motif.

The protein belongs to the class-I aminoacyl-tRNA synthetase family. Monomer.

It localises to the cytoplasm. The catalysed reaction is tRNA(Gln) + L-glutamine + ATP = L-glutaminyl-tRNA(Gln) + AMP + diphosphate. The sequence is that of Glutamine--tRNA ligase from Yersinia enterocolitica serotype O:8 / biotype 1B (strain NCTC 13174 / 8081).